The sequence spans 542 residues: Peptide chain release factor 3 (542 aa).

A tr-type G domain is found at D14–G283. GTP is bound by residues S23–T30, D91–H95, and N145–D148.

Belongs to the TRAFAC class translation factor GTPase superfamily. Classic translation factor GTPase family. PrfC subfamily.

The protein resides in the cytoplasm. In terms of biological role, increases the formation of ribosomal termination complexes and stimulates activities of RF-1 and RF-2. It binds guanine nucleotides and has strong preference for UGA stop codons. It may interact directly with the ribosome. The stimulation of RF-1 and RF-2 is significantly reduced by GTP and GDP, but not by GMP. The sequence is that of Peptide chain release factor 3 from Trichodesmium erythraeum (strain IMS101).